Reading from the N-terminus, the 56-residue chain is Small ribosomal subunit protein uS14 (56 aa).

4 residues coordinate Zn(2+): Cys-21, Cys-24, Cys-39, and Cys-42.

It belongs to the universal ribosomal protein uS14 family. Requires Zn(2+) as cofactor.

In Griffithsia japonica (Red alga), this protein is Small ribosomal subunit protein uS14 (RPS29).